Here is a 354-residue protein sequence, read N- to C-terminus: MTPPTMLQTAPVESFNLNPKSTQQAINLKSDAKNGKVSFADWNEFKFAPIRESTVSRAMTRRYFADLDKFAESDIVIIGAGSAGLSAAYTLGKNRPDLKIAIIEASVSPGGGCWLGGQLFSAMVLRKPAHLFLDDMGLDYEDEGDYVVVKHAALFMSTLMSKVLQFPNIKLFNATAVEDLITRKDPATNLQRIAGVVVNWAQLDHDTQSCMDPNTINCNVVLSTSGHDGPFGAFTAKRLEQLGRAPRDVTAGFTKPSITTSKLQEPEPISNFQLGGMKGLDMNKAEDAIVKGTREVVPGLVIAGMELAEVDGSNRMGPTFGAMALSGVKAAESVLNVLELRKQQNEACYGAYKG.

Residues A83, 104–105, G112, and V177 contribute to the substrate site; that span reads EA. 2,3-didehydroalanine (Cys) is present on C210. Substrate contacts are provided by residues D212, H227, M305, and 315–317; that span reads RMG.

Belongs to the THI4 family. In terms of assembly, homooctamer. Fe cation is required as a cofactor. During the catalytic reaction, a sulfide is transferred from Cys-210 to a reaction intermediate, generating a dehydroalanine residue.

It is found in the cytoplasm. The protein resides in the nucleus. The catalysed reaction is [ADP-thiazole synthase]-L-cysteine + glycine + NAD(+) = [ADP-thiazole synthase]-dehydroalanine + ADP-5-ethyl-4-methylthiazole-2-carboxylate + nicotinamide + 3 H2O + 2 H(+). In terms of biological role, involved in biosynthesis of the thiamine precursor thiazole. Catalyzes the conversion of NAD and glycine to adenosine diphosphate 5-(2-hydroxyethyl)-4-methylthiazole-2-carboxylic acid (ADT), an adenylated thiazole intermediate. The reaction includes an iron-dependent sulfide transfer from a conserved cysteine residue of the protein to a thiazole intermediate. The enzyme can only undergo a single turnover, which suggests it is a suicide enzyme. May have additional roles in adaptation to various stress conditions and in DNA damage tolerance. The polypeptide is Thiamine thiazole synthase (Candida albicans (strain SC5314 / ATCC MYA-2876) (Yeast)).